Consider the following 582-residue polypeptide: 15-cis-phytoene desaturase, chloroplastic/chromoplastic (582 aa).

The transit peptide at 1–93 (MNLLGSISTG…ELENTINFLE (93 aa)) directs the protein to the chloroplast and chromoplast. FAD is bound by residues A121, 140-141 (EA), K148, 165-166 (HI), and Y171. A substrate-binding site is contributed by R306. D537 contacts FAD. A545 provides a ligand contact to substrate. Residue M547 coordinates FAD.

Belongs to the carotenoid/retinoid oxidoreductase family. As to quaternary structure, homotetramer. FAD is required as a cofactor. As to expression, expressed in flower buds and lips. Lower expression in leaves and roots.

The protein localises to the plastid. Its subcellular location is the chloroplast. It is found in the chromoplast. The protein resides in the membrane. The catalysed reaction is 2 a plastoquinone + 15-cis-phytoene = 9,9',15-tri-cis-zeta-carotene + 2 a plastoquinol. Its pathway is carotenoid biosynthesis; lycopene biosynthesis. Its function is as follows. Converts phytoene into zeta-carotene via the intermediary of phytofluene by the symmetrical introduction of two double bonds at the C-11 and C-11' positions of phytoene with a concomitant isomerization of two neighboring double bonds at the C9 and C9' positions from trans to cis. The chain is 15-cis-phytoene desaturase, chloroplastic/chromoplastic (PDS) from Oncidium hybrid cultivar (Orchid).